The following is a 620-amino-acid chain: Probable potassium transport system protein Kup 1 (620 aa).

The next 12 membrane-spanning stretches (helical) occupy residues 10–30 (LLIS…LYAL), 50–70 (VLSL…VIVI), 102–122 (MLLG…TPAI), 138–158 (LTPY…MIQK), 168–188 (FGPV…VNIV), 211–231 (MMSF…EALY), 246–266 (WFAL…ALLL), 284–304 (MVVP…QAVI), 336–356 (IYIP…VIGF), 368–388 (IAVT…MALM), 393–413 (WIAV…FFFA), and 415–435 (IIKV…SFTV).

It belongs to the HAK/KUP transporter (TC 2.A.72) family.

It is found in the cell inner membrane. The catalysed reaction is K(+)(in) + H(+)(in) = K(+)(out) + H(+)(out). Transport of potassium into the cell. Likely operates as a K(+):H(+) symporter. The sequence is that of Probable potassium transport system protein Kup 1 from Rhodopseudomonas palustris (strain BisB18).